A 188-amino-acid polypeptide reads, in one-letter code: GMP synthase [glutamine-hydrolyzing] subunit A (188 aa).

Residues Lys-2 to Arg-188 form the Glutamine amidotransferase type-1 domain. Residue Cys-79 is the Nucleophile of the active site. Catalysis depends on residues His-166 and Glu-168.

Heterodimer composed of a glutamine amidotransferase subunit (A) and a GMP-binding subunit (B).

It catalyses the reaction XMP + L-glutamine + ATP + H2O = GMP + L-glutamate + AMP + diphosphate + 2 H(+). It participates in purine metabolism; GMP biosynthesis; GMP from XMP (L-Gln route): step 1/1. Catalyzes the synthesis of GMP from XMP. The protein is GMP synthase [glutamine-hydrolyzing] subunit A of Picrophilus torridus (strain ATCC 700027 / DSM 9790 / JCM 10055 / NBRC 100828 / KAW 2/3).